Here is a 268-residue protein sequence, read N- to C-terminus: TodF product hydratase (268 aa).

Belongs to the hydratase/decarboxylase family.

It functions in the pathway xenobiotic degradation; toluene degradation. Its function is as follows. Converts the product of 2-hydroxy-6-oxo-2,4-heptadienoate hydrolase. The polypeptide is TodF product hydratase (todJ) (Pseudomonas putida (strain ATCC 700007 / DSM 6899 / JCM 31910 / BCRC 17059 / LMG 24140 / F1)).